A 203-amino-acid polypeptide reads, in one-letter code: Glycerol-3-phosphate acyltransferase (203 aa).

6 helical membrane-spanning segments follow: residues 3–23 (NLIL…LILA), 61–81 (ILTV…ASFL), 87–107 (VLWT…FLGF), 118–138 (GVLA…WFLV), 144–164 (ISSL…FIIH), and 172–192 (THAP…PNIV).

The protein belongs to the PlsY family. In terms of assembly, probably interacts with PlsX.

It is found in the cell inner membrane. The catalysed reaction is an acyl phosphate + sn-glycerol 3-phosphate = a 1-acyl-sn-glycero-3-phosphate + phosphate. It participates in lipid metabolism; phospholipid metabolism. Its function is as follows. Catalyzes the transfer of an acyl group from acyl-phosphate (acyl-PO(4)) to glycerol-3-phosphate (G3P) to form lysophosphatidic acid (LPA). This enzyme utilizes acyl-phosphate as fatty acyl donor, but not acyl-CoA or acyl-ACP. In Campylobacter concisus (strain 13826), this protein is Glycerol-3-phosphate acyltransferase.